Consider the following 728-residue polypeptide: Catalase-peroxidase (728 aa).

The first 16 residues, 1-16 (MDNPTDSAGKCPVAHG), serve as a signal peptide directing secretion. Residues 1–26 (MDNPTDSAGKCPVAHGNTPRSRSNRD) are disordered. The tryptophyl-tyrosyl-methioninium (Trp-Tyr) (with M-244) cross-link spans 96–218 (WHSAGTYRIT…LGAVQMGFIY (123 aa)). His97 (proton acceptor) is an active-site residue. Positions 218–244 (YVNPEGPNGNSDPLASARDIRETFARM) form a cross-link, tryptophyl-tyrosyl-methioninium (Tyr-Met) (with W-96). A heme b-binding site is contributed by His259.

Belongs to the peroxidase family. Peroxidase/catalase subfamily. As to quaternary structure, homodimer or homotetramer. It depends on heme b as a cofactor. Post-translationally, formation of the three residue Trp-Tyr-Met cross-link is important for the catalase, but not the peroxidase activity of the enzyme.

It catalyses the reaction H2O2 + AH2 = A + 2 H2O. The catalysed reaction is 2 H2O2 = O2 + 2 H2O. Bifunctional enzyme with both catalase and broad-spectrum peroxidase activity. The chain is Catalase-peroxidase from Rhizobium leguminosarum bv. phaseoli.